Reading from the N-terminus, the 728-residue chain is Plakophilin-1 (728 aa).

The interval 1–235 is required for binding to single stranded DNA; sequence MNHSPLKTAL…SFGHSRASSK (235 aa). Residues 1 to 287 form a required for interaction with EIF4A1 region; that stretch reads MNHSPLKTAL…ESAKQQVYQL (287 aa). Ser-4 bears the Phosphoserine; by RIPK4 mark. A disordered region spans residues 48–69; that stretch reads TVKRQKSKSSQSSTLSHSNRGS. 2 phosphorylation in this region is required for cytoplasmic localization and protein stabilization regions span residues 54 to 69 and 117 to 192; these read SKSS…NRGS and RFSS…STCS. The residue at position 119 (Ser-119) is a Phosphoserine. Residue Ser-120 is modified to Phosphoserine; by RIPK4. Ser-122 is modified (phosphoserine). Residue Ser-143 is modified to Phosphoserine; by RIPK4. The tract at residues 161–270 is required for WNT-mediated nuclear localization; the sequence is YCDPRGTLRK…KYQAIGAYYI (110 aa). 9 ARM repeats span residues 244–275, 276–317, 318–360, 361–412, 413–443, 505–536, 537–583, 584–629, and 630–694; these read SGLT…HTCF, QDES…NLVF, RSTP…NLSS, TDEL…GCLR, NLSS…NCVA, NYDC…LNLM, GKSK…IARL, LQSG…SHTG, and NTSN…DMWA.

The protein belongs to the beta-catenin family. In terms of assembly, part of a complex that contains DSG3, PKP1, YAP1 and YWHAG; the complex is required for localization of DSG3 and YAP1 to the cell membrane in keratinocytes. Interacts (via N-terminus) with KRT5/CK5, KRT8/CK8 (via rod domain), KRT15/CK15 and KRT18/CK18 (via rod domain) as part of intermediate filaments. Interacts with VIM (via rod domain). Interacts with DSP. Interacts with DES. Interacts with FXR1; the interaction may facilitate the binding of PKP1 to PKP2, PKP3 and DSP mRNA. Interacts (via N-terminus) with EIF4A1; the interaction promotes EIF4A1 recruitment to the cap-dependent translation complex and EIF4A1 ATPase activity. Interacts with TJP1/ZO-1; the interaction facilitates TJP1/ZO-1 localization to the plasma membrane. Interacts (when phosphorylated) with YWHAG; the interaction results in translocation of PKP1 to the cytoplasm and loss of intercellular adhesion in keratinocytes. Post-translationally, phosphorylated by AKT2; required for interaction with YWHAG and subsequent localization away from desmosomes to the cytoplasm. Phosphorylation of Ser-119 by AKT2 promotes PKP1-driven cap-dependent mRNA translation and decreases intercellular adhesion, phosphorylation is promoted by insulin. Phosphorylation by RIPK4 at the N-terminus is required for its role in differentiation of keratinocytes and DSG1 localization at cell junctions. As to expression, expressed in undifferentiated keratinocytes of the epidermis at birth, expression increases as differentiation proceeds (at protein level). Expressed in the cervical loop during early tooth differentiation, expression is then present between ameloblasts, at ameloblast-ameloblast junctions and in the stratum intermedium during pre-secretory and secretory stages of tooth development (at protein level).

The protein localises to the nucleus. It is found in the cytoplasm. It localises to the perinuclear region. Its subcellular location is the cell junction. The protein resides in the desmosome. The protein localises to the cell membrane. It is found in the stress granule. In terms of biological role, a component of desmosome cell-cell junctions which are required for positive regulation of cellular adhesion. Plays a role in desmosome protein expression regulation and localization to the desmosomal plaque, thereby maintaining cell sheet integrity and anchorage of desmosomes to intermediate filaments. Required for localization of DSG3 and YAP1 to the cell membrane in keratinocytes in response to mechanical strain, via the formation of an interaction complex composed of DSG3, YAP1, PKP1 and YWHAG. Positively regulates differentiation of keratinocytes, potentially via promoting localization of DSG1 at desmosome cell junctions. Required for calcium-independent development and maturation of desmosome plaques specifically at lateral cell-cell contacts in differentiating keratinocytes. Plays a role in the maintenance of DSG3 protein abundance, DSG3 clustering and localization of these clusters to the cell membrane in keratinocytes. May also promote keratinocyte proliferation and morphogenesis during postnatal development. Required for tight junction inside-out transepidermal barrier function of the skin, and is thereby involved in neonatal survival possibly via maintenance of hydration levels. Promotes Wnt-mediated proliferation and differentiation of ameloblasts, via facilitating TJP1/ZO-1 localization to tight junctions. Binds single-stranded DNA (ssDNA), and may thereby play a role in sensing DNA damage and promoting cell survival. Positively regulates cap-dependent translation and as a result cell proliferation, via recruitment of EIF4A1 to the initiation complex and promotion of EIF4A1 ATPase activity. Regulates the mRNA stability and protein abundance of desmosome components PKP2, PKP3, DSC2 and DSP, potentially via its interaction with FXR1. The sequence is that of Plakophilin-1 (Pkp1) from Mus musculus (Mouse).